The following is an 834-amino-acid chain: MNTYFISFITIIIFANGINGTSVDTSNKLLLQKANDFNLSQNLSSSRTRRTIANSFRIVGIRLEDETVETKNGIPTVLVDKEQQFRVFGSGLEENTAITFTNEKNDYGGPCLKPATDLFTPIEVSSNGFSALYSVKFPSFINEFFICAKTAEKTTNHSKAATTTPLEHQGNSDFLKIKTFEPLIPVWLAIIIIVTCLGFSALFSGLNLGLMSMDRTELKILRNTGTEKEKKYASKIAPVRDQGNYLLCSILLGNVLVNSTFTILLDGLTSGLFAVIFSTLAIVLFGEITPQAVCSRHGLAIGAKTILVTKTVMAITAPLSYPVSRILDKLLGEEIGNVYNRERLKELVRVTNDVNDLDKNEVNIISGALELRKKTVADVMTHINDAFMLSLDALLDFETVSEIMNSGYSRIPVYDGDRKNIVTLLYIKDLAFVDTDDNTPLKTLCEFYQNPVHFVFEDYTLDIMFNQFKEGTIGHIAFVHRVNNEGDGDPFYETVGLVTLEDVIEELIQAEIVDETDVFVDNRTKTRRNRYKKADFSAFAERREVQTVRISPQLTLATFQYLSTAVDAFKKDVISELILRRLLNQDVFHNIKTKGKSKDDPSLYIFTQGKAVDFFVLILEGRVEVTIGKEALMFESGPFTYFGTQALVPNVVIDSPTQMGSLQSLNMDSKIRQSFVPDYSVRAISDVIYITIKRVLYLTAKKATLLEKSRKSGTFSSETFDDEVERLLHSITENEKPSCFAQNQSTRRLSNRSINSSPTNMNRSPDFVYNSVDEAIQDDTKLKNIKHADNVTTSISLVAAELEDLHSGEQDTTAASMPLLPKLDDKFESKQSKP.

An N-terminal signal peptide occupies residues 1–20 (MNTYFISFITIIIFANGING). Residues 21–182 (TSVDTSNKLL…DFLKIKTFEP (162 aa)) lie on the Extracellular side of the membrane. N-linked (GlcNAc...) asparagine glycosylation is found at N38, N42, and N156. The CNNM transmembrane domain occupies 182-361 (PLIPVWLAII…NDVNDLDKNE (180 aa)). The helical transmembrane segment at 183–203 (LIPVWLAIIIIVTCLGFSALF) threads the bilayer. The Cytoplasmic portion of the chain corresponds to 204–244 (SGLNLGLMSMDRTELKILRNTGTEKEKKYASKIAPVRDQGN). The helical transmembrane segment at 245–265 (YLLCSILLGNVLVNSTFTILL) threads the bilayer. Over 266-267 (DG) the chain is Extracellular. Residues 268–288 (LTSGLFAVIFSTLAIVLFGEI) form a helical membrane-spanning segment. Residues 289-298 (TPQAVCSRHG) are Cytoplasmic-facing. The chain crosses the membrane as a helical span at residues 299–319 (LAIGAKTILVTKTVMAITAPL). Residues 320-834 (SYPVSRILDK…DKFESKQSKP (515 aa)) lie on the Extracellular side of the membrane. CBS domains follow at residues 380-441 (MTHI…NTPL) and 448-515 (YQNP…IVDE). N522 is a glycosylation site (N-linked (GlcNAc...) asparagine). 604–656 (YIFTQGKAVDFFVLILEGRVEVTIGKEALMFESGPFTYFGTQALVPNVVIDSP) lines the a nucleoside 3',5'-cyclic phosphate pocket. Positions 739 to 765 (CFAQNQSTRRLSNRSINSSPTNMNRSP) are disordered. Residues 740–763 (FAQNQSTRRLSNRSINSSPTNMNR) are compositionally biased toward polar residues. N743, N751, and N790 each carry an N-linked (GlcNAc...) asparagine glycan. The segment at 807–834 (SGEQDTTAASMPLLPKLDDKFESKQSKP) is disordered. Residues 822–834 (KLDDKFESKQSKP) are compositionally biased toward basic and acidic residues.

The protein belongs to the ACDP family. Interacts with PRL-1, possibly at the plasma membrane.

The protein localises to the cell membrane. Probable metal transporter. Acts downstream of PRL-1 and protects the nervous system against olfactory carbon dioxide stimulation. The sequence is that of Unextended protein from Drosophila melanogaster (Fruit fly).